Consider the following 106-residue polypeptide: Iron-sulfur cluster assembly protein CyaY (106 aa).

It belongs to the frataxin family.

Its function is as follows. Involved in iron-sulfur (Fe-S) cluster assembly. May act as a regulator of Fe-S biogenesis. This Citrobacter koseri (strain ATCC BAA-895 / CDC 4225-83 / SGSC4696) protein is Iron-sulfur cluster assembly protein CyaY.